The sequence spans 503 residues: Maturase K (503 aa).

It belongs to the intron maturase 2 family. MatK subfamily.

The protein resides in the plastid. The protein localises to the chloroplast. In terms of biological role, usually encoded in the trnK tRNA gene intron. Probably assists in splicing its own and other chloroplast group II introns. In Caragana arborescens (Siberian pea tree), this protein is Maturase K.